A 249-amino-acid chain; its full sequence is Exosome complex component Rrp41 (249 aa).

This sequence belongs to the RNase PH family. Rrp41 subfamily. Component of the archaeal exosome complex. Forms a hexameric ring-like arrangement composed of 3 Rrp41-Rrp42 heterodimers. The hexameric ring associates with a trimer of Rrp4 and/or Csl4 subunits.

The protein localises to the cytoplasm. Catalytic component of the exosome, which is a complex involved in RNA degradation. Has 3'-&gt;5' exoribonuclease activity. Can also synthesize heteromeric RNA-tails. The sequence is that of Exosome complex component Rrp41 from Pyrococcus horikoshii (strain ATCC 700860 / DSM 12428 / JCM 9974 / NBRC 100139 / OT-3).